The following is a 547-amino-acid chain: Chaperonin GroEL (547 aa).

ATP contacts are provided by residues 30-33 (TLGP), K51, 87-91 (DGTTT), G416, 480-482 (NAA), and D496.

Belongs to the chaperonin (HSP60) family. As to quaternary structure, forms a cylinder of 14 subunits composed of two heptameric rings stacked back-to-back. Interacts with the co-chaperonin GroES.

It localises to the cytoplasm. The enzyme catalyses ATP + H2O + a folded polypeptide = ADP + phosphate + an unfolded polypeptide.. Its function is as follows. Together with its co-chaperonin GroES, plays an essential role in assisting protein folding. The GroEL-GroES system forms a nano-cage that allows encapsulation of the non-native substrate proteins and provides a physical environment optimized to promote and accelerate protein folding. The chain is Chaperonin GroEL from Pseudoalteromonas translucida (strain TAC 125).